Reading from the N-terminus, the 95-residue chain is Cobalt transport protein CbiN (95 aa).

The next 2 helical transmembrane spans lie at 5–25 and 67–87; these read HIIL…IYAG and LLFA…IGYY.

The protein belongs to the CbiN family. In terms of assembly, forms an energy-coupling factor (ECF) transporter complex composed of an ATP-binding protein (A component, CbiO), a transmembrane protein (T component, CbiQ) and 2 possible substrate-capture proteins (S components, CbiM and CbiN) of unknown stoichimetry.

Its subcellular location is the cell membrane. It functions in the pathway cofactor biosynthesis; adenosylcobalamin biosynthesis. Part of the energy-coupling factor (ECF) transporter complex CbiMNOQ involved in cobalt import. The sequence is that of Cobalt transport protein CbiN from Methanocaldococcus jannaschii (strain ATCC 43067 / DSM 2661 / JAL-1 / JCM 10045 / NBRC 100440) (Methanococcus jannaschii).